The primary structure comprises 434 residues: Tol-Pal system protein TolB (434 aa).

Residues 1-28 form the signal peptide; that stretch reads MMNTRVWCKIIGMLALLVWLVSSPSVFA.

It belongs to the TolB family. As to quaternary structure, the Tol-Pal system is composed of five core proteins: the inner membrane proteins TolA, TolQ and TolR, the periplasmic protein TolB and the outer membrane protein Pal. They form a network linking the inner and outer membranes and the peptidoglycan layer.

Its subcellular location is the periplasm. Functionally, part of the Tol-Pal system, which plays a role in outer membrane invagination during cell division and is important for maintaining outer membrane integrity. In Nitrosococcus oceani (strain ATCC 19707 / BCRC 17464 / JCM 30415 / NCIMB 11848 / C-107), this protein is Tol-Pal system protein TolB.